We begin with the raw amino-acid sequence, 269 residues long: Membrane protein insertase YidC 1 (269 aa).

An N-terminal signal peptide occupies residues 1–20; sequence MKKKFSLIAMAGAALLLLTA. Residue Cys-21 is the site of N-palmitoyl cysteine attachment. Cys-21 is lipidated: S-diacylglycerol cysteine. Transmembrane regions (helical) follow at residues 45–65, 124–144, 165–185, and 203–223; these read IRFL…TIVI, YMGC…YQAL, PTFI…YLMM, and PIFI…YWVI.

The protein belongs to the OXA1/ALB3/YidC family. Type 2 subfamily.

The protein resides in the cell membrane. Functionally, required for the insertion and/or proper folding and/or complex formation of integral membrane proteins into the membrane. Involved in integration of membrane proteins that insert both dependently and independently of the Sec translocase complex, as well as at least some lipoproteins. The chain is Membrane protein insertase YidC 1 from Lactococcus lactis subsp. lactis (strain IL1403) (Streptococcus lactis).